The primary structure comprises 119 residues: MIVGIGIDIIELNRIEKMLDGKLKFMERILTENERNVAKGLKGSRLTEFVAGRFAAKEAYSKAVGTGIGKEVSFLDIEVRNDDRGKPILITSTEHIVHLSISHSKEFAVAQVVLESSSS.

Positions 8 and 58 each coordinate Mg(2+).

The protein belongs to the P-Pant transferase superfamily. AcpS family. Mg(2+) serves as cofactor.

The protein resides in the cytoplasm. It catalyses the reaction apo-[ACP] + CoA = holo-[ACP] + adenosine 3',5'-bisphosphate + H(+). In terms of biological role, transfers the 4'-phosphopantetheine moiety from coenzyme A to a Ser of acyl-carrier-protein. This chain is Holo-[acyl-carrier-protein] synthase, found in Bacillus thuringiensis subsp. konkukian (strain 97-27).